A 271-amino-acid polypeptide reads, in one-letter code: TIP41-like protein (271 aa).

The residue at position 106 (K106) is an N6-acetyllysine. The interval 173-271 (RVMPSSFFLL…PVDSESAPSE (99 aa)) is interaction with PPP2CA. Phosphoserine occurs at positions 265 and 270.

The protein belongs to the TIP41 family. In terms of assembly, interacts with PPP2CA. Interacts with PPP2CB, PPP4C and PPP6C. Interacts with IGBP1; the interaction is dependent on PPP2CA. Associates with a protein phosphatase 2A PP2A(C):IGBP1 complex. Interacts with PPP4C and PPP4R2.

It is found in the cytoplasm. Functionally, may be a allosteric regulator of serine/threonine-protein phosphatase 2A (PP2A). Inhibits catalytic activity of the PP2A(D) core complex in vitro. The PP2A(C):TIPRL complex does not show phosphatase activity. Acts as a negative regulator of serine/threonine-protein phosphatase 4 probably by inhibiting the formation of the active PPP4C:PPP4R2 complex; the function is proposed to implicate it in DNA damage response by promoting H2AX phosphorylated on Ser-140 (gamma-H2AX). May play a role in the regulation of ATM/ATR signaling pathway controlling DNA replication and repair. In Rattus norvegicus (Rat), this protein is TIP41-like protein (Tiprl).